The sequence spans 95 residues: Signal recognition particle 19 kDa protein (95 aa).

The protein belongs to the SRP19 family. As to quaternary structure, part of the signal recognition particle protein translocation system, which is composed of SRP and FtsY. Archaeal SRP consists of a 7S RNA molecule of 300 nucleotides and two protein subunits: SRP54 and SRP19.

It localises to the cytoplasm. Functionally, involved in targeting and insertion of nascent membrane proteins into the cytoplasmic membrane. Binds directly to 7S RNA and mediates binding of the 54 kDa subunit of the SRP. The chain is Signal recognition particle 19 kDa protein from Methanococcoides burtonii (strain DSM 6242 / NBRC 107633 / OCM 468 / ACE-M).